Consider the following 145-residue polypeptide: Anaerobic nitrite reductase NSHB5 (145 aa).

Residues 2–142 (GFSETQEELV…LAAAIKEEMK (141 aa)) form the Globin domain. The Homodimerization signature appears at 35 to 39 (EIAPA). Residues Ser45, His59, Lys61, Arg84, Thr88, and His89 each coordinate heme b. A Homodimerization motif is present at residues 96-108 (DAYFEVVKTALLD).

Belongs to the plant globin family. Homodimer. Requires heme b as cofactor. In terms of tissue distribution, expressed in embryonic (embryos, coleoptiles and seminal roots) and vegetative (leaves and roots) organs.

The protein localises to the cytoplasm. It localises to the nucleus. It catalyses the reaction Fe(III)-heme b-[protein] + nitric oxide + H2O = Fe(II)-heme b-[protein] + nitrite + 2 H(+). Phytoglobin that reduces nitrite to nitric oxide under anoxic conditions (e.g. during flooding or in waterlogged soil). May not function as an oxygen storage or transport protein. Has an unusually high affinity for O(2) through an hexacoordinate heme iron because of a very low dissociation constant. In Oryza sativa subsp. japonica (Rice), this protein is Anaerobic nitrite reductase NSHB5.